We begin with the raw amino-acid sequence, 299 residues long: UDP-N-acetylenolpyruvoylglucosamine reductase (299 aa).

Residues 26–191 form the FAD-binding PCMH-type domain; that stretch reads GIGGPAKYFV…VSATFQLNAS (166 aa). Arg-170 is an active-site residue. The active-site Proton donor is Cys-218. Residue Glu-288 is part of the active site.

Belongs to the MurB family. FAD serves as cofactor.

It is found in the cytoplasm. It catalyses the reaction UDP-N-acetyl-alpha-D-muramate + NADP(+) = UDP-N-acetyl-3-O-(1-carboxyvinyl)-alpha-D-glucosamine + NADPH + H(+). It functions in the pathway cell wall biogenesis; peptidoglycan biosynthesis. Functionally, cell wall formation. The sequence is that of UDP-N-acetylenolpyruvoylglucosamine reductase from Protochlamydia amoebophila (strain UWE25).